Consider the following 1216-residue polypeptide: RAB11-binding protein RELCH (1216 aa).

Disordered stretches follow at residues 1-73 (MAAM…GLPG) and 135-177 (GNFE…QLNR). The residue at position 2 (Ala-2) is an N-acetylalanine. Residues Ser-20 and Ser-22 each carry the phosphoserine modification. The segment covering 21 to 31 (DSDEDDDEVAA) has biased composition (acidic residues). The residue at position 32 (Thr-32) is a Phosphothreonine. 2 positions are modified to phosphoserine: Ser-54 and Ser-56. Residues 148–163 (GAPGVPGAAGVGGAGG) are compositionally biased toward gly residues. 2 positions are modified to phosphoserine: Ser-180 and Ser-182. Thr-183 carries the phosphothreonine modification. Ser-186 carries the post-translational modification Phosphoserine. The stretch at 197 to 231 (NRETDEKVAVLEFELRKAKETIQALRANLTKAAEH) forms a coiled coil. The LisH domain occupies 255–287 (EKRALNFLVNEFLLKNNYKLTSITFSDENDDQD). Positions 359-397 (VQKLEDKISLLNSEKWSLMEQIRRLKSEMDFLKNEHFAI) form a coiled coil. Residue Ser-385 is modified to Phosphoserine. The interval 401–477 (CDSVQPPLDQ…SSLSSKKTVH (77 aa)) is disordered. The segment covering 411–435 (LPHKDSEDSGQHPDVNSSDKGKNTD) has biased composition (basic and acidic residues). Position 453 is a phosphoserine (Ser-453). The segment at 497 to 779 (CRMSADSRLG…SSKAKLHGEV (283 aa)) is interaction with RAB11A and RAB11B. HEAT repeat units lie at residues 601–639 (LLPQ…RSSL) and 640–679 (VLSM…KYHQ). Ser-792 carries the post-translational modification Phosphoserine. The HEAT 3 repeat unit spans residues 1004 to 1042 (VAPALVTLSSDPEFSVRIATIPAFGTIMETVIQRELLER). The residue at position 1149 (Ser-1149) is a Phosphoserine.

The protein localises to the recycling endosome. It is found in the golgi apparatus. Its subcellular location is the trans-Golgi network. Functionally, regulates intracellular cholesterol distribution from recycling endosomes to the trans-Golgi network through interactions with RAB11 and OSBP. Functions in membrane tethering and promotes OSBP-mediated cholesterol transfer between RAB11-bound recycling endosomes and OSBP-bound Golgi-like membranes. The sequence is that of RAB11-binding protein RELCH from Homo sapiens (Human).